The primary structure comprises 376 residues: Erythronate-4-phosphate dehydrogenase (376 aa).

Substrate-binding residues include serine 45 and threonine 67. Aspartate 147 lines the NAD(+) pocket. The active site involves arginine 209. Residue aspartate 233 coordinates NAD(+). The active site involves glutamate 238. Histidine 255 serves as the catalytic Proton donor. Residue glycine 258 participates in NAD(+) binding. Tyrosine 259 is a substrate binding site.

This sequence belongs to the D-isomer specific 2-hydroxyacid dehydrogenase family. PdxB subfamily. Homodimer.

It localises to the cytoplasm. It carries out the reaction 4-phospho-D-erythronate + NAD(+) = (R)-3-hydroxy-2-oxo-4-phosphooxybutanoate + NADH + H(+). Its pathway is cofactor biosynthesis; pyridoxine 5'-phosphate biosynthesis; pyridoxine 5'-phosphate from D-erythrose 4-phosphate: step 2/5. In terms of biological role, catalyzes the oxidation of erythronate-4-phosphate to 3-hydroxy-2-oxo-4-phosphonooxybutanoate. The protein is Erythronate-4-phosphate dehydrogenase of Shewanella baltica (strain OS195).